The chain runs to 118 residues: Vitelline coat lysin (118 aa).

This Tegula pfeifferi (Pfeiffer's top shell) protein is Vitelline coat lysin.